The chain runs to 294 residues: Light-independent protochlorophyllide reductase iron-sulfur ATP-binding protein (294 aa).

Residues 10 to 15 (GIGKST) and lysine 39 contribute to the ATP site. Serine 14 contributes to the Mg(2+) binding site. [4Fe-4S] cluster-binding residues include cysteine 95 and cysteine 129. 180–181 (NR) provides a ligand contact to ATP.

This sequence belongs to the NifH/BchL/ChlL family. As to quaternary structure, homodimer. Protochlorophyllide reductase is composed of three subunits; ChlL, ChlN and ChlB. [4Fe-4S] cluster serves as cofactor.

It localises to the plastid. The protein resides in the chloroplast. It carries out the reaction chlorophyllide a + oxidized 2[4Fe-4S]-[ferredoxin] + 2 ADP + 2 phosphate = protochlorophyllide a + reduced 2[4Fe-4S]-[ferredoxin] + 2 ATP + 2 H2O. Its pathway is porphyrin-containing compound metabolism; chlorophyll biosynthesis (light-independent). In terms of biological role, component of the dark-operative protochlorophyllide reductase (DPOR) that uses Mg-ATP and reduced ferredoxin to reduce ring D of protochlorophyllide (Pchlide) to form chlorophyllide a (Chlide). This reaction is light-independent. The L component serves as a unique electron donor to the NB-component of the complex, and binds Mg-ATP. The chain is Light-independent protochlorophyllide reductase iron-sulfur ATP-binding protein from Pleurastrum terricola (Filamentous green alga).